Reading from the N-terminus, the 295-residue chain is MSRDLPSLNALRAFEAAARLHSISLAAEELHVTHGAVSRQVRLLEDDLGVALFGKDGRGVKLTDSGVRLRDACGDAFERLRGVCAELRRQTAEAPFVLGVPGSLLARWFIPRLDQLNRALPDLRLQLSTSEGEFDPRRPGLDAMLWFAEPPWPADMQVFELAPERMGPVVSPRLAQETGLAQAPAARLLQEPLLHTASRPQAWPAWAASQGLAAEALRYGQGFEHLYYLLEAAVAGLGVAIAPEPLVRDDLAAGRLAAPWGFIETDARLALWVPARLHDPRAGRLAQWLREQLAG.

In terms of domain architecture, HTH lysR-type spans 6-63 (PSLNALRAFEAAARLHSISLAAEELHVTHGAVSRQVRLLEDDLGVALFGKDGRGVKLT). The H-T-H motif DNA-binding region spans 23-42 (ISLAAEELHVTHGAVSRQVR).

The protein belongs to the LysR transcriptional regulatory family. In terms of assembly, homotetramer.

In terms of biological role, activates the expression of the trpBA genes, which encode the two tryptophan synthase subunits, and represses initiation at its own promoter. Acts by binding to two adjacent sites in the intergenic region. In the absence of the inducer indoleglycerol phosphate (InGP), TrpI binds to site I. In the presence of InGP, TrpI binds to site I and site II. Binding to site II is site I dependent. InGP strongly stimulates binding to site II and is required for maximal activation of trpBA. This chain is HTH-type transcriptional regulator TrpI, found in Pseudomonas aeruginosa (strain ATCC 15692 / DSM 22644 / CIP 104116 / JCM 14847 / LMG 12228 / 1C / PRS 101 / PAO1).